Reading from the N-terminus, the 105-residue chain is Venom metalloprotease inhibitor (105 aa).

The first 21 residues, 1-21 (MFRFVCVLFIALVVFCTTTSA), serve as a signal peptide directing secretion. Intrachain disulfides connect Cys-26–Cys-61, Cys-35–Cys-57, Cys-39–Cys-50, Cys-43–Cys-83, and Cys-63–Cys-77. A TIL domain is found at 26–83 (CNRPNEEYRCGSACQTTCATLGQRCPIMNIRCNDACYCKEGYARYGDDTGMCVSISQC).

Belongs to the serine protease inhibitor-like (TIL domain-containing) family. Expressed by the venom gland.

It is found in the secreted. Functionally, inhibits metalloprotease (human MMP3), trypsin, chymotrypsin, plasmin and microbial serine protease (proteinase K). Exhibits antifibrinolytic activity by binding plasmin and inhibiting it. Does not inhibit elastase, thrombin or microbial serine protease (subtilisin A). This is Venom metalloprotease inhibitor from Bombus ignitus (Bumblebee).